Consider the following 147-residue polypeptide: Urease accessory protein UreE (147 aa).

It belongs to the UreE family.

It is found in the cytoplasm. Functionally, involved in urease metallocenter assembly. Binds nickel. Probably functions as a nickel donor during metallocenter assembly. In Marinomonas sp. (strain MWYL1), this protein is Urease accessory protein UreE.